Reading from the N-terminus, the 554-residue chain is Formate--tetrahydrofolate ligase (554 aa).

65–72 (TPAGEGKT) serves as a coordination point for ATP.

This sequence belongs to the formate--tetrahydrofolate ligase family.

It catalyses the reaction (6S)-5,6,7,8-tetrahydrofolate + formate + ATP = (6R)-10-formyltetrahydrofolate + ADP + phosphate. It functions in the pathway one-carbon metabolism; tetrahydrofolate interconversion. This chain is Formate--tetrahydrofolate ligase, found in Petrotoga mobilis (strain DSM 10674 / SJ95).